The sequence spans 63 residues: Large ribosomal subunit protein bL28 (63 aa).

Belongs to the bacterial ribosomal protein bL28 family.

This Kosmotoga olearia (strain ATCC BAA-1733 / DSM 21960 / TBF 19.5.1) protein is Large ribosomal subunit protein bL28.